The following is a 325-amino-acid chain: Probable cell division protein WhiA (325 aa).

The segment at residues 273–306 is a DNA-binding region (H-T-H motif); that stretch reads SLEELGALADPPLTKDAVAGRIRRLLALADKRAN.

Belongs to the WhiA family.

Its function is as follows. Involved in cell division and chromosome segregation. In Frankia casuarinae (strain DSM 45818 / CECT 9043 / HFP020203 / CcI3), this protein is Probable cell division protein WhiA.